Consider the following 341-residue polypeptide: UDP-3-O-acylglucosamine N-acyltransferase (341 aa).

The active-site Proton acceptor is histidine 241.

Belongs to the transferase hexapeptide repeat family. LpxD subfamily. Homotrimer.

The catalysed reaction is a UDP-3-O-[(3R)-3-hydroxyacyl]-alpha-D-glucosamine + a (3R)-hydroxyacyl-[ACP] = a UDP-2-N,3-O-bis[(3R)-3-hydroxyacyl]-alpha-D-glucosamine + holo-[ACP] + H(+). Its pathway is bacterial outer membrane biogenesis; LPS lipid A biosynthesis. Catalyzes the N-acylation of UDP-3-O-acylglucosamine using 3-hydroxyacyl-ACP as the acyl donor. Is involved in the biosynthesis of lipid A, a phosphorylated glycolipid that anchors the lipopolysaccharide to the outer membrane of the cell. This is UDP-3-O-acylglucosamine N-acyltransferase from Saccharophagus degradans (strain 2-40 / ATCC 43961 / DSM 17024).